The primary structure comprises 355 residues: Acyl-CoA desaturase 1 (355 aa).

Residues 1–68 lie on the Cytoplasmic side of the membrane; sequence MPAHMLQEIS…EGPPPKLEYV (68 aa). Residues 9–20 show a composition bias toward low complexity; that stretch reads ISSSYTTTTTIT. The segment at 9–33 is disordered; sequence ISSSYTTTTTITAPPSGNEREKVKT. Residues 69-89 form a helical membrane-spanning segment; sequence WRNIILMVLLHLGGLYGIILV. Asparagine 71 is a substrate binding site. At 90 to 93 the chain is on the lumenal side; sequence PSCK. The helical transmembrane segment at 94 to 114 threads the bilayer; that stretch reads LYTCLFGIFYYMTSALGITAG. The Cytoplasmic segment spans residues 115–213; it reads AHRLWSHRTY…EKLVMFQRRY (99 aa). Positions 116 and 121 each coordinate Fe cation. The Histidine box-1 signature appears at 116 to 121; it reads HRLWSH. 3 residues coordinate substrate: asparagine 144, arginine 151, and aspartate 152. Residues histidine 153, histidine 156, and histidine 157 each coordinate Fe cation. A Histidine box-2 motif is present at residues 153–157; the sequence is HRAHH. Residues arginine 184 and lysine 185 each coordinate substrate. The chain crosses the membrane as a helical span at residues 214 to 233; that stretch reads YKPGLLLMCFILPTLVPWYC. Residues 234-237 are Lumenal-facing; sequence WGET. Residues 238–259 form a helical membrane-spanning segment; that stretch reads FVNSLFVSTFLRYTLVLNATWL. Tryptophan 258 provides a ligand contact to substrate. Over 260 to 355 the chain is Cytoplasmic; it reads VNSAAHLYGY…RTGDGSHKSS (96 aa). Residues histidine 265, histidine 294, histidine 297, and histidine 298 each coordinate Fe cation. The Histidine box-3 signature appears at 294–298; it reads HNYHH.

Belongs to the fatty acid desaturase type 1 family. Fe(2+) serves as cofactor. As to expression, detected in liver (at protein level). Detected in skin and liver. Detected in sebaceous gland, but not in hair follicle. Detected in white and brown adipose tissue, eyelid, Harderian gland, and at lower levels in Meibomian gland, eyeball and adrenal gland. Highly expressed in liver, and detected at low levels in brain, heart, lung, stomach, skeletal muscle and kidney.

It is found in the endoplasmic reticulum membrane. Its subcellular location is the microsome membrane. It catalyses the reaction octadecanoyl-CoA + 2 Fe(II)-[cytochrome b5] + O2 + 2 H(+) = (9Z)-octadecenoyl-CoA + 2 Fe(III)-[cytochrome b5] + 2 H2O. Its function is as follows. Stearoyl-CoA desaturase that utilizes O(2) and electrons from reduced cytochrome b5 to introduce the first double bond into saturated fatty acyl-CoA substrates. Catalyzes the insertion of a cis double bond at the Delta-9 position into fatty acyl-CoA substrates including palmitoyl-CoA and stearoyl-CoA. Gives rise to a mixture of 16:1 and 18:1 unsaturated fatty acids. Plays an important role in lipid biosynthesis. Plays an important role in regulating the expression of genes that are involved in lipogenesis and in regulating mitochondrial fatty acid oxidation. Plays an important role in body energy homeostasis. Contributes to the biosynthesis of membrane phospholipids, cholesterol esters and triglycerides. Required for normal development of sebaceous glands. Required for the biosynthesis of normal levels of Delta-9 unsaturated fatty acids and 1-alkyl-2,3-diacylglycerol in the Harderian gland. Required for normal production of meibum, an oily material that prevents drying of the cornea. In Mus musculus (Mouse), this protein is Acyl-CoA desaturase 1 (Scd1).